We begin with the raw amino-acid sequence, 177 residues long: Probable prophage lysozyme (177 aa).

Catalysis depends on Glu-35, which acts as the Proton donor. The Nucleophile role is filled by Asp-44.

Belongs to the glycosyl hydrolase 24 family.

It catalyses the reaction Hydrolysis of (1-&gt;4)-beta-linkages between N-acetylmuramic acid and N-acetyl-D-glucosamine residues in a peptidoglycan and between N-acetyl-D-glucosamine residues in chitodextrins.. Its function is as follows. Essential for lysis of bacterial cell wall, by showing cell wall hydrolyzing activity. The protein is Probable prophage lysozyme (rrrQ) of Escherichia coli (strain K12).